A 112-amino-acid polypeptide reads, in one-letter code: MALYEHVVITRPDISPAQVESFIEEMTTFLKEKGATVGKTEYWGLRSLAYPIKKQRKGHYSLINIDGPADAIHELERRQRIAEDVMRYMTVRVETLSDEPSPVLSRKERRRD.

It belongs to the bacterial ribosomal protein bS6 family.

In terms of biological role, binds together with bS18 to 16S ribosomal RNA. In Hyphomonas neptunium (strain ATCC 15444), this protein is Small ribosomal subunit protein bS6.